The sequence spans 365 residues: Peptide chain release factor 2 (365 aa).

N5-methylglutamine is present on Gln251.

This sequence belongs to the prokaryotic/mitochondrial release factor family. Methylated by PrmC. Methylation increases the termination efficiency of RF2.

The protein localises to the cytoplasm. Its function is as follows. Peptide chain release factor 2 directs the termination of translation in response to the peptide chain termination codons UGA and UAA. This is Peptide chain release factor 2 from Campylobacter jejuni subsp. jejuni serotype O:23/36 (strain 81-176).